Reading from the N-terminus, the 145-residue chain is Eukaryotic translation initiation factor 1A (145 aa).

The span at 1 to 15 shows a compositional bias: basic residues; the sequence is MPKNKGKGGKNRKRG. The interval 1-25 is disordered; that stretch reads MPKNKGKGGKNRKRGKNEADDDKRE. Basic and acidic residues predominate over residues 16–25; sequence KNEADDDKRE. Residues 22–96 enclose the S1-like domain; that stretch reads DKRELVFKED…DKADVILKLM (75 aa).

The protein belongs to the eIF-1A family.

Its function is as follows. Seems to be required for maximal rate of protein biosynthesis. Enhances ribosome dissociation into subunits and stabilizes the binding of the initiator Met-tRNA(I) to 40 S ribosomal subunits. In Onobrychis viciifolia (Common sainfoin), this protein is Eukaryotic translation initiation factor 1A.